Here is a 279-residue protein sequence, read N- to C-terminus: 3-methyl-2-oxobutanoate hydroxymethyltransferase 2 (279 aa).

Residues aspartate 58 and aspartate 97 each coordinate Mg(2+). Residues 58 to 59, aspartate 97, and lysine 126 each bind 3-methyl-2-oxobutanoate; that span reads DS. Glutamate 128 contributes to the Mg(2+) binding site. Glutamate 195 (proton acceptor) is an active-site residue.

This sequence belongs to the PanB family. Homodecamer; pentamer of dimers. Mg(2+) serves as cofactor.

It localises to the cytoplasm. The enzyme catalyses 3-methyl-2-oxobutanoate + (6R)-5,10-methylene-5,6,7,8-tetrahydrofolate + H2O = 2-dehydropantoate + (6S)-5,6,7,8-tetrahydrofolate. The protein operates within cofactor biosynthesis; (R)-pantothenate biosynthesis; (R)-pantoate from 3-methyl-2-oxobutanoate: step 1/2. Catalyzes the reversible reaction in which hydroxymethyl group from 5,10-methylenetetrahydrofolate is transferred onto alpha-ketoisovalerate to form ketopantoate. The sequence is that of 3-methyl-2-oxobutanoate hydroxymethyltransferase 2 from Methylibium petroleiphilum (strain ATCC BAA-1232 / LMG 22953 / PM1).